The chain runs to 134 residues: Profilin-2 (134 aa).

The cysteines at positions 13 and 118 are disulfide-linked. The Involved in PIP2 interaction motif lies at 84–100 (AVIRGKKGSGGITIKKT). T114 bears the Phosphothreonine mark.

Belongs to the profilin family. Occurs in many kinds of cells as a complex with monomeric actin in a 1:1 ratio. In terms of processing, phosphorylated by MAP kinases.

It localises to the cytoplasm. Its subcellular location is the cytoskeleton. In terms of biological role, binds to actin and affects the structure of the cytoskeleton. At high concentrations, profilin prevents the polymerization of actin, whereas it enhances it at low concentrations. This chain is Profilin-2, found in Olea europaea (Common olive).